The chain runs to 402 residues: GPI mannosyltransferase 1 (402 aa).

10 helical membrane passes run 5–25, 79–99, 108–128, 162–182, 191–211, 238–258, 260–280, 309–329, 333–353, and 365–385; these read VILL…YGIF, WIHM…VMII, LTKQ…ITIS, LSIH…IYLL, IWRL…PTYF, FSIW…SQSI, LSKL…YLLW, QYFI…TITW, VVCI…AYLL, and LFFG…VFIT.

This sequence belongs to the PIGM family.

The protein localises to the endoplasmic reticulum membrane. The protein operates within glycolipid biosynthesis; glycosylphosphatidylinositol-anchor biosynthesis. Mannosyltransferase involved in glycosylphosphatidylinositol-anchor biosynthesis. Transfers the first alpha-1,4-mannose to GlcN-acyl-PI during GPI precursor assembly. Required for cell wall integrity. The protein is GPI mannosyltransferase 1 (GPI14) of Kluyveromyces lactis (strain ATCC 8585 / CBS 2359 / DSM 70799 / NBRC 1267 / NRRL Y-1140 / WM37) (Yeast).